Reading from the N-terminus, the 61-residue chain is Large ribosomal subunit protein eL37 (61 aa).

Zn(2+)-binding residues include C20, C23, C35, and C38. The C4-type zinc finger occupies C20–C38.

The protein belongs to the eukaryotic ribosomal protein eL37 family. The cofactor is Zn(2+).

Functionally, binds to the 23S rRNA. The protein is Large ribosomal subunit protein eL37 of Caldivirga maquilingensis (strain ATCC 700844 / DSM 13496 / JCM 10307 / IC-167).